A 417-amino-acid chain; its full sequence is Valine--pyruvate aminotransferase (417 aa).

K249 carries the N6-(pyridoxal phosphate)lysine modification.

Belongs to the class-I pyridoxal-phosphate-dependent aminotransferase family. As to quaternary structure, homodimer. Requires pyridoxal 5'-phosphate as cofactor.

The protein localises to the cytoplasm. The enzyme catalyses L-valine + pyruvate = 3-methyl-2-oxobutanoate + L-alanine. Its function is as follows. Involved in the biosynthesis of alanine. The protein is Valine--pyruvate aminotransferase (avtA) of Escherichia coli (strain K12).